Consider the following 700-residue polypeptide: MLRPATPLAVLLFAAFGLLTLATISTPIIKQIPLSSFEIKDVGDLSFGVFGYCTSSGCSPIEIGYDTSAFSDKINSDFDIPRATRSTLSSILIVHPVAALITLINFVLAIVAHFHSPSHSARYLLILFIVSFVDFIVCLLCFLVDVLLFIPHLSWGSYIVVAATILVAFCGLVTCAMRRTLVNRKANRKRIAENAEMSGENYYNRQAQTAPVTQVTGPQPTVPMISGANGGGDKLPEFTTFEKKDDRSEERIPLTSVSPIERSPATLVNDSTPPNFMDGAPSRSPSTTPVGRDQYGNPLPPQDGYAMRVGPQNERLNSRGRGGMPPGGYRGRGGFPGPGRGGGPPQNGRGGYGPPGRGRGGYGPPPRGYGGPGPRGGRGPPPQGYQGGPDRRPSPGAPYGPGPGVGTYGPSQPSPYANRQQSPGPQFAAPGYGNPEQPGPQYSAYNPRRVSLPRAESPPPLPGIDDGMPGPAVELDASPANRGVGQYGIRDSDSDVAGMLAMQQARVPDPDRGNDANGHSQEGPNDVYVPPRQAWNQGFVGSTPGLAPPTARGPTRPISEAVTATVASDYYEDVDPRFAEPSAAADKRPPPISMQSPPASNSYDDIPNRARSPAESENSNFTSISQRGINPRWNSANAPMPPPVAGVYAGGGGGGNVVPRRPVNRPGAGPADGSDLFLNSNPDFQLPGRGGNMPRAAGPR.

Residues 1–8 are Cytoplasmic-facing; the sequence is MLRPATPL. The helical transmembrane segment at 9-29 threads the bilayer; sequence AVLLFAAFGLLTLATISTPII. Topologically, residues 30-90 are extracellular; the sequence is KQIPLSSFEI…PRATRSTLSS (61 aa). Residues 91-111 traverse the membrane as a helical segment; the sequence is ILIVHPVAALITLINFVLAIV. At 112-123 the chain is on the cytoplasmic side; it reads AHFHSPSHSARY. Residues 124-144 form a helical membrane-spanning segment; sequence LLILFIVSFVDFIVCLLCFLV. Residues 145–152 lie on the Extracellular side of the membrane; that stretch reads DVLLFIPH. Residues 153 to 173 traverse the membrane as a helical segment; the sequence is LSWGSYIVVAATILVAFCGLV. Over 174–700 the chain is Cytoplasmic; it reads TCAMRRTLVN…GNMPRAAGPR (527 aa). 3 disordered regions span residues 226–491, 507–560, and 573–700; these read SGAN…GIRD, VPDP…PISE, and DVDP…AGPR. Positions 234 to 252 are enriched in basic and acidic residues; that stretch reads KLPEFTTFEKKDDRSEERI. Positions 320–378 are enriched in gly residues; sequence GRGGMPPGGYRGRGGFPGPGRGGGPPQNGRGGYGPPGRGRGGYGPPPRGYGGPGPRGGR. Residues 414 to 424 show a composition bias toward polar residues; sequence SPYANRQQSPG. 2 stretches are compositionally biased toward polar residues: residues 593–603 and 615–637; these read SMQSPPASNSY and ESEN…NSAN. Over residues 657–671 the composition is skewed to low complexity; the sequence is VVPRRPVNRPGAGPA.

The protein belongs to the palI/RIM9 family.

It localises to the cell membrane. Required for the proteolytic cleavage of the transcription factor pacc-1 in response to alkaline ambient pH. The polypeptide is pH-response regulator protein palI/prr-5 (prr-5) (Neurospora crassa (strain ATCC 24698 / 74-OR23-1A / CBS 708.71 / DSM 1257 / FGSC 987)).